The primary structure comprises 589 residues: Transcription factor atf-6 homolog (589 aa).

Basic and acidic residues predominate over residues 1–16 (MNFDNTVHESNFDDLL). Residues 1–82 (MNFDNTVHES…SSPPLSCANF (82 aa)) form a disordered region. Low complexity-rich tracts occupy residues 36 to 54 (GTDE…FSDQ) and 67 to 78 (GDSSSDSSPPLS). The 50-residue stretch at 250–299 (QNRKIRNRMYAQASRMRKKEADEHMKMNLQELLQENEILRTENAALKQRL) folds into the bZIP domain. Residues 252–275 (RKIRNRMYAQASRMRKKEADEHMK) form a basic motif region. A coiled-coil region spans residues 271–305 (DEHMKMNLQELLQENEILRTENAALKQRLAFFEHE). The tract at residues 281-295 (LLQENEILRTENAAL) is leucine-zipper. The chain crosses the membrane as a helical span at residues 324–344 (IIAAGSVLMMFGLFAVISPFN).

It belongs to the bZIP family. ATF subfamily.

The protein resides in the nucleus. It is found in the membrane. Transcription factor. Plays a role in the unfolded protein response (UPR), perhaps mainly during constitutive endoplasmic reticulum (ER) stress, by activating transcription of genes involved in the UPR. Plays a role in modulating lifespan, acting by positively regulating expression of calcium-binding chaperone crt-1, thereby influencing ER calcium homeostasis. By activating the UPR pathway, confers adaptive protection to subsequent exposure to hypoxia. Involved in protection against proteotoxicity, probably acting via the UPR. Probably acts in the UPR in parallel with the ire-1-xbp-1 and pek-1 pathways. May be regulated by endopeptidase S2P-mediated proteolytic cleavage. This is Transcription factor atf-6 homolog from Caenorhabditis elegans.